Reading from the N-terminus, the 192-residue chain is UPF0149 protein KPN78578_32810 (192 aa).

This sequence belongs to the UPF0149 family.

This chain is UPF0149 protein KPN78578_32810, found in Klebsiella pneumoniae subsp. pneumoniae (strain ATCC 700721 / MGH 78578).